The following is a 205-amino-acid chain: MIIKVCGMREPENIRAIEQAGADWMGFIFFPQSARYVSHRPEYLPEQCHRIGVFVNESSENILLKAQEFGLHHIQLHGRETPEQCRKLKAAGLGVIKVFSIAQESDLQSAGCYEGVCDYFLFDTACSGYGGSGKTFNWNILQAYRGKTPFLLSGGLRPGSLSLLLQFKHEQWAGIDLNSGFETAPALKDDAAVHTFINQLKQKIQ.

It belongs to the TrpF family.

It catalyses the reaction N-(5-phospho-beta-D-ribosyl)anthranilate = 1-(2-carboxyphenylamino)-1-deoxy-D-ribulose 5-phosphate. It participates in amino-acid biosynthesis; L-tryptophan biosynthesis; L-tryptophan from chorismate: step 3/5. The chain is N-(5'-phosphoribosyl)anthranilate isomerase from Phocaeicola vulgatus (strain ATCC 8482 / DSM 1447 / JCM 5826 / CCUG 4940 / NBRC 14291 / NCTC 11154) (Bacteroides vulgatus).